The sequence spans 346 residues: 3-dehydroquinate synthase (346 aa).

Residues 62–67, 96–100, 120–121, lysine 133, and lysine 142 each bind NAD(+); these read DGEQYK, GVISD, and TT. Positions 175, 234, and 251 each coordinate Zn(2+).

The protein belongs to the sugar phosphate cyclases superfamily. Dehydroquinate synthase family. Requires Co(2+) as cofactor. Zn(2+) is required as a cofactor. The cofactor is NAD(+).

Its subcellular location is the cytoplasm. The catalysed reaction is 7-phospho-2-dehydro-3-deoxy-D-arabino-heptonate = 3-dehydroquinate + phosphate. It functions in the pathway metabolic intermediate biosynthesis; chorismate biosynthesis; chorismate from D-erythrose 4-phosphate and phosphoenolpyruvate: step 2/7. In terms of biological role, catalyzes the conversion of 3-deoxy-D-arabino-heptulosonate 7-phosphate (DAHP) to dehydroquinate (DHQ). The chain is 3-dehydroquinate synthase from Campylobacter fetus subsp. fetus (strain 82-40).